Reading from the N-terminus, the 631-residue chain is Dolichyl-diphosphooligosaccharide--protein glycosyltransferase subunit 2 (631 aa).

The signal sequence occupies residues 1–22 (MAPPGSSTVFLLALTIIASTWA). Residues 23–540 (LTPTHYLTKH…REPEKRPPTV (518 aa)) lie on the Lumenal side of the membrane. N-linked (GlcNAc...) asparagine glycosylation is present at N106. A Glycyl lysine isopeptide (Lys-Gly) (interchain with G-Cter in ubiquitin) cross-link involves residue K154. Residues 541–561 (VSNTFTALILSPLLLLFALWI) form a helical membrane-spanning segment. At 562–571 (RIGANVSNFT) the chain is on the cytoplasmic side. The chain crosses the membrane as a helical span at residues 572-592 (FAPSTIIFHLGHAAMLGLMYV). Over 593 to 596 (YWTQ) the chain is Lumenal. The helical transmembrane segment at 597 to 617 (LNMFQTLKYLAILGSVTFLAG) threads the bilayer. The Cytoplasmic portion of the chain corresponds to 618–631 (NRMLAQQAVKRTAH).

This sequence belongs to the SWP1 family. In terms of assembly, component of the oligosaccharyltransferase (OST) complex. OST exists in two different complex forms which contain common core subunits RPN1, RPN2, OST48, OST4, DAD1 and TMEM258, either STT3A or STT3B as catalytic subunits, and form-specific accessory subunits. STT3A complex assembly occurs through the formation of 3 subcomplexes. Subcomplex 1 contains RPN1 and TMEM258, subcomplex 2 contains the STT3A-specific subunits STT3A, DC2/OSTC, and KCP2 as well as the core subunit OST4, and subcomplex 3 contains RPN2, DAD1, and OST48. The STT3A complex can form stable complexes with the Sec61 complex or with both the Sec61 and TRAP complexes. Interacts with DDI2. Interacts with TMEM35A/NACHO. In terms of tissue distribution, expressed in all tissues tested.

It is found in the endoplasmic reticulum. Its subcellular location is the endoplasmic reticulum membrane. It functions in the pathway protein modification; protein glycosylation. Its function is as follows. Subunit of the oligosaccharyl transferase (OST) complex that catalyzes the initial transfer of a defined glycan (Glc(3)Man(9)GlcNAc(2) in eukaryotes) from the lipid carrier dolichol-pyrophosphate to an asparagine residue within an Asn-X-Ser/Thr consensus motif in nascent polypeptide chains, the first step in protein N-glycosylation. N-glycosylation occurs cotranslationally and the complex associates with the Sec61 complex at the channel-forming translocon complex that mediates protein translocation across the endoplasmic reticulum (ER). All subunits are required for a maximal enzyme activity. The sequence is that of Dolichyl-diphosphooligosaccharide--protein glycosyltransferase subunit 2 from Homo sapiens (Human).